Consider the following 129-residue polypeptide: MAKDTGRVKRRERKNITSGVAHVSASFNNTMVTITDAQGNAISWSSAGHMGFKGSRKSTPYAAQMAAEDAGKKAMEHGMKTIEVKVSGPGSGRESALRALQSVGFTITTIQDVTPIPHNGCRPPKRRRV.

It belongs to the universal ribosomal protein uS11 family. Part of the 30S ribosomal subunit. Interacts with proteins S7 and S18. Binds to IF-3.

Its function is as follows. Located on the platform of the 30S subunit, it bridges several disparate RNA helices of the 16S rRNA. Forms part of the Shine-Dalgarno cleft in the 70S ribosome. The chain is Small ribosomal subunit protein uS11 from Maricaulis maris (strain MCS10) (Caulobacter maris).